The sequence spans 412 residues: Protein arginine N-methyltransferase 2 (412 aa).

The RMT2 domain occupies 190–412; it reads TAADPDTYLN…YYYHPKISFA (223 aa). S-adenosyl-L-methionine-binding positions include Tyr197, Met227, 250 to 255, 271 to 273, 298 to 299, and Asp319; these read FGMGII, EAH, and WQ.

Belongs to the class I-like SAM-binding methyltransferase superfamily. RMT2 methyltransferase family. As to quaternary structure, monomer.

The protein resides in the cytoplasm. Its subcellular location is the nucleus. Its function is as follows. S-adenosyl-L-methionine-dependent protein-arginine N-methyltransferase that methylates the delta-nitrogen atom of arginine residues to form N5-methylarginine (type IV) in target proteins. Monomethylates ribosomal protein L12. The chain is Protein arginine N-methyltransferase 2 from Candida glabrata (strain ATCC 2001 / BCRC 20586 / JCM 3761 / NBRC 0622 / NRRL Y-65 / CBS 138) (Yeast).